Consider the following 725-residue polypeptide: Methionine--tRNA ligase (725 aa).

The short motif at 27 to 37 (PYANGQIHIGH) is the 'HIGH' region element. Positions 158, 161, 171, and 174 each coordinate Zn(2+). The 'KMSKS' region signature appears at 348–352 (KMSKS). Lys351 serves as a coordination point for ATP. The tRNA-binding domain occupies 619–725 (DFAKIDLRIA…SGAKPGMRVK (107 aa)).

Belongs to the class-I aminoacyl-tRNA synthetase family. MetG type 1 subfamily. Homodimer. The cofactor is Zn(2+).

It is found in the cytoplasm. It carries out the reaction tRNA(Met) + L-methionine + ATP = L-methionyl-tRNA(Met) + AMP + diphosphate. Is required not only for elongation of protein synthesis but also for the initiation of all mRNA translation through initiator tRNA(fMet) aminoacylation. In Burkholderia pseudomallei (strain 1106a), this protein is Methionine--tRNA ligase.